We begin with the raw amino-acid sequence, 553 residues long: Chaperonin GroEL 2 (553 aa).

Residues 29-32, 86-90, Gly-414, and Asp-495 each bind ATP; these read TLGP and DGTTT.

The protein belongs to the chaperonin (HSP60) family. As to quaternary structure, forms a cylinder of 14 subunits composed of two heptameric rings stacked back-to-back. Interacts with the co-chaperonin GroES.

It localises to the cytoplasm. The enzyme catalyses ATP + H2O + a folded polypeptide = ADP + phosphate + an unfolded polypeptide.. In terms of biological role, together with its co-chaperonin GroES, plays an essential role in assisting protein folding. The GroEL-GroES system forms a nano-cage that allows encapsulation of the non-native substrate proteins and provides a physical environment optimized to promote and accelerate protein folding. The polypeptide is Chaperonin GroEL 2 (Gloeobacter violaceus (strain ATCC 29082 / PCC 7421)).